The sequence spans 261 residues: Transmembrane protein 187 (261 aa).

6 helical membrane passes run Ala8 to Phe28, Ala43 to Ala63, Val88 to Trp108, Val113 to Leu133, Trp140 to Gly162, and Ser190 to Cys210.

Ubiquitous.

Its subcellular location is the membrane. In Homo sapiens (Human), this protein is Transmembrane protein 187 (TMEM187).